Reading from the N-terminus, the 77-residue chain is Large ribosomal subunit protein uL24 (77 aa).

Belongs to the universal ribosomal protein uL24 family. As to quaternary structure, part of the 50S ribosomal subunit.

Its function is as follows. One of two assembly initiator proteins, it binds directly to the 5'-end of the 23S rRNA, where it nucleates assembly of the 50S subunit. Functionally, one of the proteins that surrounds the polypeptide exit tunnel on the outside of the subunit. The polypeptide is Large ribosomal subunit protein uL24 (Sulfurovum sp. (strain NBC37-1)).